Here is a 90-residue protein sequence, read N- to C-terminus: Small ribosomal subunit protein uS15 (90 aa).

It belongs to the universal ribosomal protein uS15 family. In terms of assembly, part of the 30S ribosomal subunit. Forms a bridge to the 50S subunit in the 70S ribosome, contacting the 23S rRNA.

Functionally, one of the primary rRNA binding proteins, it binds directly to 16S rRNA where it helps nucleate assembly of the platform of the 30S subunit by binding and bridging several RNA helices of the 16S rRNA. In terms of biological role, forms an intersubunit bridge (bridge B4) with the 23S rRNA of the 50S subunit in the ribosome. This chain is Small ribosomal subunit protein uS15, found in Wolbachia sp. subsp. Brugia malayi (strain TRS).